Consider the following 190-residue polypeptide: Xanthine phosphoribosyltransferase (190 aa).

Xanthine-binding residues include Leu-20 and Asn-27. Ala-128–Ala-132 provides a ligand contact to 5-phospho-alpha-D-ribose 1-diphosphate. Residue Lys-156 participates in xanthine binding.

It belongs to the purine/pyrimidine phosphoribosyltransferase family. Xpt subfamily. In terms of assembly, homodimer.

It localises to the cytoplasm. The enzyme catalyses XMP + diphosphate = xanthine + 5-phospho-alpha-D-ribose 1-diphosphate. It participates in purine metabolism; XMP biosynthesis via salvage pathway; XMP from xanthine: step 1/1. Its function is as follows. Converts the preformed base xanthine, a product of nucleic acid breakdown, to xanthosine 5'-monophosphate (XMP), so it can be reused for RNA or DNA synthesis. The chain is Xanthine phosphoribosyltransferase from Pseudomonas putida (strain ATCC 700007 / DSM 6899 / JCM 31910 / BCRC 17059 / LMG 24140 / F1).